A 356-amino-acid polypeptide reads, in one-letter code: Tyrosine recombinase XerS (356 aa).

The Core-binding (CB) domain maps to 16 to 121 (IMPWYVLDYY…ALSSLYKYLT (106 aa)). The region spanning 169-354 (AFLDYVDKEY…VNDEQKNALD (186 aa)) is the Tyr recombinase domain. Catalysis depends on residues Arg210, Lys234, His306, Arg309, and His332. The active-site O-(3'-phospho-DNA)-tyrosine intermediate is the Tyr341.

Belongs to the 'phage' integrase family. XerS subfamily.

The protein resides in the cytoplasm. With respect to regulation, ftsK is required for recombination. Its function is as follows. Site-specific tyrosine recombinase, which acts by catalyzing the cutting and rejoining of the recombining DNA molecules. Essential to convert dimers of the bacterial chromosome into monomers to permit their segregation at cell division. This is Tyrosine recombinase XerS from Streptococcus pyogenes serotype M5 (strain Manfredo).